The chain runs to 242 residues: Small ribosomal subunit protein uS2 (242 aa).

This sequence belongs to the universal ribosomal protein uS2 family.

This chain is Small ribosomal subunit protein uS2, found in Aeromonas hydrophila subsp. hydrophila (strain ATCC 7966 / DSM 30187 / BCRC 13018 / CCUG 14551 / JCM 1027 / KCTC 2358 / NCIMB 9240 / NCTC 8049).